A 202-amino-acid polypeptide reads, in one-letter code: ATP-dependent Clp protease proteolytic subunit (202 aa).

S106 (nucleophile) is an active-site residue. The active site involves H131.

The protein belongs to the peptidase S14 family. In terms of assembly, fourteen ClpP subunits assemble into 2 heptameric rings which stack back to back to give a disk-like structure with a central cavity, resembling the structure of eukaryotic proteasomes.

Its subcellular location is the cytoplasm. It catalyses the reaction Hydrolysis of proteins to small peptides in the presence of ATP and magnesium. alpha-casein is the usual test substrate. In the absence of ATP, only oligopeptides shorter than five residues are hydrolyzed (such as succinyl-Leu-Tyr-|-NHMec, and Leu-Tyr-Leu-|-Tyr-Trp, in which cleavage of the -Tyr-|-Leu- and -Tyr-|-Trp bonds also occurs).. Its function is as follows. Cleaves peptides in various proteins in a process that requires ATP hydrolysis. Has a chymotrypsin-like activity. Plays a major role in the degradation of misfolded proteins. The chain is ATP-dependent Clp protease proteolytic subunit from Shewanella sp. (strain MR-7).